Consider the following 436-residue polypeptide: Protein TolB homolog (436 aa).

The first 27 residues, 1-27 (MRHSIRLTAALLLAFIACFSFPLSAMA), serve as a signal peptide directing secretion.

The protein belongs to the TolB family.

It localises to the periplasm. The chain is Protein TolB homolog from Chlorobium luteolum (strain DSM 273 / BCRC 81028 / 2530) (Pelodictyon luteolum).